The sequence spans 720 residues: Catalase-peroxidase (720 aa).

A cross-link (tryptophyl-tyrosyl-methioninium (Trp-Tyr) (with M-233)) is located at residues 82 to 207; it reads WHSAGTYRTF…LGNTVMGLIY (126 aa). His83 (proton acceptor) is an active-site residue. The segment at residues 207–233 is a cross-link (tryptophyl-tyrosyl-methioninium (Tyr-Met) (with W-82)); it reads YVNPEGPNGEPDLEGSAKNIRESFGKM. His248 lines the heme b pocket.

The protein belongs to the peroxidase family. Peroxidase/catalase subfamily. As to quaternary structure, homodimer or homotetramer. It depends on heme b as a cofactor. Formation of the three residue Trp-Tyr-Met cross-link is important for the catalase, but not the peroxidase activity of the enzyme.

The enzyme catalyses H2O2 + AH2 = A + 2 H2O. The catalysed reaction is 2 H2O2 = O2 + 2 H2O. In terms of biological role, bifunctional enzyme with both catalase and broad-spectrum peroxidase activity. This Halobacterium salinarum (strain ATCC 29341 / DSM 671 / R1) protein is Catalase-peroxidase.